Reading from the N-terminus, the 206-residue chain is Thymidylate kinase (206 aa).

7–14 provides a ligand contact to ATP; the sequence is GGEGVGKT.

This sequence belongs to the thymidylate kinase family.

The catalysed reaction is dTMP + ATP = dTDP + ADP. In terms of biological role, phosphorylation of dTMP to form dTDP in both de novo and salvage pathways of dTTP synthesis. This chain is Thymidylate kinase, found in Synechococcus sp. (strain JA-2-3B'a(2-13)) (Cyanobacteria bacterium Yellowstone B-Prime).